A 104-amino-acid polypeptide reads, in one-letter code: MLRKAFVMSVFPDSHDEYQRRHNPIWPELAEVLKNHGAHHYSIFLDKQRNLLFGYVEVESEARWEAIAQTDVCQRWWKHMGDVMPSNPDNSPISDALDPVFYLD.

Y18 provides a ligand contact to substrate. H22 functions as the Proton donor in the catalytic mechanism. Residues Y41 and 76 to 77 each bind substrate; that span reads WW. Positions 85–104 are disordered; sequence PSNPDNSPISDALDPVFYLD.

This sequence belongs to the rhamnose mutarotase family. In terms of assembly, homodimer.

It localises to the cytoplasm. The catalysed reaction is alpha-L-rhamnose = beta-L-rhamnose. Its pathway is carbohydrate metabolism; L-rhamnose metabolism. Its function is as follows. Involved in the anomeric conversion of L-rhamnose. This is L-rhamnose mutarotase from Pectobacterium atrosepticum (strain SCRI 1043 / ATCC BAA-672) (Erwinia carotovora subsp. atroseptica).